We begin with the raw amino-acid sequence, 61 residues long: MGNAVNNKDQQIDYLKNRLDMFMNVIDSLDPEATDVEDIDRLISMLDDLEAKYERFKKDWE.

Positions 34–61 form a coiled coil; it reads TDVEDIDRLISMLDDLEAKYERFKKDWE.

This is an uncharacterized protein from Bacillus subtilis (strain 168).